Here is a 218-residue protein sequence, read N- to C-terminus: Putative transposase InsD for insertion element IS2E (218 aa).

An Integrase catalytic domain is found at 23–206 (KPAVPPSKRA…SPREYLRQRA (184 aa)).

In terms of biological role, involved in the transposition of the insertion sequence IS2. The chain is Putative transposase InsD for insertion element IS2E (insD8) from Escherichia coli (strain K12).